The following is a 193-amino-acid chain: NADH-quinone oxidoreductase subunit B (193 aa).

[4Fe-4S] cluster contacts are provided by Cys-72, Cys-73, Cys-137, and Cys-167.

The protein belongs to the complex I 20 kDa subunit family. As to quaternary structure, NDH-1 is composed of 14 different subunits. Subunits NuoB, C, D, E, F, and G constitute the peripheral sector of the complex. [4Fe-4S] cluster is required as a cofactor.

The protein localises to the cell inner membrane. It carries out the reaction a quinone + NADH + 5 H(+)(in) = a quinol + NAD(+) + 4 H(+)(out). Its function is as follows. NDH-1 shuttles electrons from NADH, via FMN and iron-sulfur (Fe-S) centers, to quinones in the respiratory chain. The immediate electron acceptor for the enzyme in this species is believed to be ubiquinone. Couples the redox reaction to proton translocation (for every two electrons transferred, four hydrogen ions are translocated across the cytoplasmic membrane), and thus conserves the redox energy in a proton gradient. This chain is NADH-quinone oxidoreductase subunit B, found in Bradyrhizobium sp. (strain ORS 278).